The following is a 252-amino-acid chain: Probable 6-phosphogluconolactonase 5 (252 aa).

It belongs to the glucosamine/galactosamine-6-phosphate isomerase family. 6-phosphogluconolactonase subfamily.

The protein localises to the cytoplasm. It localises to the cytosol. It carries out the reaction 6-phospho-D-glucono-1,5-lactone + H2O = 6-phospho-D-gluconate + H(+). The protein operates within carbohydrate degradation; pentose phosphate pathway; D-ribulose 5-phosphate from D-glucose 6-phosphate (oxidative stage): step 2/3. Functionally, catalyzes the hydrolysis of 6-phosphogluconolactone to 6-phosphogluconate. This chain is Probable 6-phosphogluconolactonase 5, found in Arabidopsis thaliana (Mouse-ear cress).